The primary structure comprises 459 residues: Glycerol-3-phosphate acyltransferase, chloroplastic (459 aa).

The N-terminal 90 residues, 1–90, are a transit peptide targeting the chloroplast; the sequence is MTLTFSSSAA…FNEAAGETPS (90 aa). The HXXXXD motif motif lies at 229–234; it reads HQSEAD.

Belongs to the GPAT/DAPAT family.

It is found in the plastid. The protein resides in the chloroplast stroma. The enzyme catalyses sn-glycerol 3-phosphate + an acyl-CoA = a 1-acyl-sn-glycero-3-phosphate + CoA. The protein operates within phospholipid metabolism; CDP-diacylglycerol biosynthesis; CDP-diacylglycerol from sn-glycerol 3-phosphate: step 1/3. Its function is as follows. Esterifies acyl-group from acyl-ACP to the sn-1 position of glycerol-3-phosphate. The enzyme from chilling-resistant plants discriminates against non-fluid palmitic acid and selects oleic acid whereas the enzyme from sensitive plants accepts both fatty acids. This is an oleate-selective acyltransferase. The chain is Glycerol-3-phosphate acyltransferase, chloroplastic (ATS1) from Arabidopsis thaliana (Mouse-ear cress).